A 344-amino-acid chain; its full sequence is Protein-glutamate methylesterase/protein-glutamine glutaminase 1 (344 aa).

One can recognise a Response regulatory domain in the interval 5–122 (RVLVVDDSAT…GTQEALAEIV (118 aa)). Asp-56 carries the 4-aspartylphosphate modification. The CheB-type methylesterase domain occupies 151–343 (FMPSGDIVAI…QSILDLASAR (193 aa)). Residues Ser-163, His-189, and Asp-285 contribute to the active site.

This sequence belongs to the CheB family. In terms of processing, phosphorylated by CheA. Phosphorylation of the N-terminal regulatory domain activates the methylesterase activity.

The protein localises to the cytoplasm. It catalyses the reaction [protein]-L-glutamate 5-O-methyl ester + H2O = L-glutamyl-[protein] + methanol + H(+). It carries out the reaction L-glutaminyl-[protein] + H2O = L-glutamyl-[protein] + NH4(+). Functionally, involved in chemotaxis. Part of a chemotaxis signal transduction system that modulates chemotaxis in response to various stimuli. Catalyzes the demethylation of specific methylglutamate residues introduced into the chemoreceptors (methyl-accepting chemotaxis proteins or MCP) by CheR. Also mediates the irreversible deamidation of specific glutamine residues to glutamic acid. In Caulobacter vibrioides (strain ATCC 19089 / CIP 103742 / CB 15) (Caulobacter crescentus), this protein is Protein-glutamate methylesterase/protein-glutamine glutaminase 1.